The sequence spans 919 residues: MFS-type transporter clz9 (919 aa).

Residues 1-11 (MAASTKPTTKL) are compositionally biased toward polar residues. The segment at 1–33 (MAASTKPTTKLSTEEDDVSRRDSESSADFMKSN) is disordered. The chain crosses the membrane as a helical span at residues 69 to 89 (VVASFAAAISPFSTSTYYPVV). Asparagine 104 carries an N-linked (GlcNAc...) asparagine glycan. The next 3 helical transmembrane spans lie at 132–152 (PMFL…ALQN), 192–212 (LIYA…IGGL), and 222–242 (VFWF…IFFG). Asparagine 260 is a glycosylation site (N-linked (GlcNAc...) asparagine). 4 helical membrane passes run 303 to 323 (FILS…TSVL), 333 to 353 (YDAV…LLAY), 393 to 413 (LGFV…YGWQ), and 418 to 438 (APLA…TGVM). N-linked (GlcNAc...) asparagine glycosylation occurs at asparagine 461. A helical transmembrane segment spans residues 465 to 485 (LLLGAGAVAVVGPLNKSAGIG). In terms of domain architecture, DDE-1 spans 641–809 (REWVTLIQGI…FTSANICSSF (169 aa)). Positions 840–897 (EAPWEAKTPSNRKKKQIQKRGTLTKGEGEDTLAQKEADQQIEREQRQGGEQSGRSRQA) are disordered. Residues 865-886 (GEGEDTLAQKEADQQIEREQRQ) are compositionally biased toward basic and acidic residues. Over residues 887 to 896 (GGEQSGRSRQ) the composition is skewed to low complexity. N-linked (GlcNAc...) asparagine glycosylation occurs at asparagine 915.

Belongs to the major facilitator superfamily. CAR1 family.

It localises to the membrane. Its function is as follows. MFS-type transporter; part of the gene cluster that mediates the biosynthesis of squalestatin S1 (SQS1, also known as zaragozic acid A), a heavily oxidized fungal polyketide that offers potent cholesterol lowering activity by targeting squalene synthase (SS). The polypeptide is MFS-type transporter clz9 (Cochliobolus lunatus (Filamentous fungus)).